We begin with the raw amino-acid sequence, 98 residues long: Co-chaperonin GroES 1 (98 aa).

The protein belongs to the GroES chaperonin family. As to quaternary structure, heptamer of 7 subunits arranged in a ring. Interacts with the chaperonin GroEL.

It localises to the cytoplasm. In terms of biological role, together with the chaperonin GroEL, plays an essential role in assisting protein folding. The GroEL-GroES system forms a nano-cage that allows encapsulation of the non-native substrate proteins and provides a physical environment optimized to promote and accelerate protein folding. GroES binds to the apical surface of the GroEL ring, thereby capping the opening of the GroEL channel. This chain is Co-chaperonin GroES 1, found in Rhizobium meliloti (strain 1021) (Ensifer meliloti).